The following is a 255-amino-acid chain: tRNA (guanine-N(7)-)-methyltransferase (255 aa).

Positions Met1–Pro31 are disordered. Residues Ile18–Asp27 show a composition bias toward acidic residues. The S-adenosyl-L-methionine site is built by Glu86, Glu111, Asp138, and Asp161. Residue Asp161 is part of the active site. Substrate-binding positions include Lys165, Asp197, and Thr232–Glu235.

Belongs to the class I-like SAM-binding methyltransferase superfamily. TrmB family.

The catalysed reaction is guanosine(46) in tRNA + S-adenosyl-L-methionine = N(7)-methylguanosine(46) in tRNA + S-adenosyl-L-homocysteine. It participates in tRNA modification; N(7)-methylguanine-tRNA biosynthesis. In terms of biological role, catalyzes the formation of N(7)-methylguanine at position 46 (m7G46) in tRNA. This is tRNA (guanine-N(7)-)-methyltransferase from Burkholderia cenocepacia (strain HI2424).